Here is a 95-residue protein sequence, read N- to C-terminus: uncharacterized protein (95 aa).

A disordered region spans residues 1 to 64 (MEIDDIFASK…PKGASGRKRT (64 aa)). Residues 18 to 28 (KSNDSKSEAKA) show a composition bias toward basic and acidic residues. A compositionally biased stretch (polar residues) spans 35–49 (TKSTPSRPKPTNNQD).

This is an uncharacterized protein from Schizosaccharomyces pombe (strain 972 / ATCC 24843) (Fission yeast).